The chain runs to 191 residues: Protein YceI (191 aa).

An N-terminal signal peptide occupies residues 1-22; that stretch reads MKKSLLGLTFASLMFSAGSAVA.

This sequence belongs to the UPF0312 family. Type 1 subfamily.

Its subcellular location is the periplasm. The polypeptide is Protein YceI (Escherichia coli O17:K52:H18 (strain UMN026 / ExPEC)).